We begin with the raw amino-acid sequence, 826 residues long: U-box domain-containing protein 4 (826 aa).

A coiled-coil region spans residues 172–204 (RSNQEILIEAVALERQKEMAEQSENNAEVEFLD). The 75-residue stretch at 229–303 (AILADFFCPL…ANWCETNDVK (75 aa)) folds into the U-box domain. The disordered stretch occupies residues 330 to 501 (GADVSARKVS…TRRDLSDFSP (172 aa)). Residues 347 to 360 (ASSSETGKPSFSSR) show a composition bias toward polar residues. The span at 391-414 (DARRGSLNDFEDRSNDSRELRTDA) shows a compositional bias: basic and acidic residues. Serine 396 is modified (phosphoserine). Positions 416–428 (GRSSVSSTTRGSV) are enriched in low complexity. Basic and acidic residues predominate over residues 492 to 501 (TRRDLSDFSP). ARM repeat units lie at residues 530 to 570 (NETR…LLAK), 573 to 612 (MDNRIVIGNSGAIVLLVELLYSTDSATQENAVTALLNLSI), 614 to 653 (DNNKKAIADAGAIEPLIHVLENGSSEAKENSAATLFSLSV), 655 to 694 (EENKIKIGQSGAIGPLVDLLGNGTPRGKKDAATALFNLSI), 696 to 734 (QENKAMIVQSGAVRYLIDLMDPAAGMVDKAVAVLANLAT), 736 to 775 (PEGRNAIGQEGGIPLLVEVVELGSARGKENAAAALLQLST), and 778 to 817 (GRFCNMVLQEGAVPPLVALSQSGTPRAREKAQALLSYFRN).

It catalyses the reaction S-ubiquitinyl-[E2 ubiquitin-conjugating enzyme]-L-cysteine + [acceptor protein]-L-lysine = [E2 ubiquitin-conjugating enzyme]-L-cysteine + N(6)-ubiquitinyl-[acceptor protein]-L-lysine.. It functions in the pathway protein modification; protein ubiquitination. Functionally, functions as an E3 ubiquitin ligase. The protein is U-box domain-containing protein 4 (PUB4) of Arabidopsis thaliana (Mouse-ear cress).